The primary structure comprises 464 residues: tRNA-2-methylthio-N(6)-dimethylallyladenosine synthase (464 aa).

The 117-residue stretch at 19 to 135 (GSYWITTFGC…LENLLGKVDL (117 aa)) folds into the MTTase N-terminal domain. Cys28, Cys64, Cys98, Cys170, Cys174, and Cys177 together coordinate [4Fe-4S] cluster. The region spanning 156 to 394 (RESSICGWVN…DLVEKTARSR (239 aa)) is the Radical SAM core domain. In terms of domain architecture, TRAM spans 396–464 (QRYIDNIESV…PFSLTGELSL (69 aa)).

It belongs to the methylthiotransferase family. MiaB subfamily. In terms of assembly, monomer. It depends on [4Fe-4S] cluster as a cofactor.

The protein resides in the cytoplasm. The enzyme catalyses N(6)-dimethylallyladenosine(37) in tRNA + (sulfur carrier)-SH + AH2 + 2 S-adenosyl-L-methionine = 2-methylsulfanyl-N(6)-dimethylallyladenosine(37) in tRNA + (sulfur carrier)-H + 5'-deoxyadenosine + L-methionine + A + S-adenosyl-L-homocysteine + 2 H(+). Catalyzes the methylthiolation of N6-(dimethylallyl)adenosine (i(6)A), leading to the formation of 2-methylthio-N6-(dimethylallyl)adenosine (ms(2)i(6)A) at position 37 in tRNAs that read codons beginning with uridine. The protein is tRNA-2-methylthio-N(6)-dimethylallyladenosine synthase of Prochlorococcus marinus (strain MIT 9301).